Here is a 226-residue protein sequence, read N- to C-terminus: MGDDLVKVKICGITNEEDIAYISKKVHAVGVIVDVPVKTPRKISLDKAIELKKYVAPFTSLVTVLMPNSIEEVLEIYNALKPNAIQLHGFESLDFVKELNKLKNTGELNAHIIKVIHIPKDEEIDFKTLLNTAKEYEKYVEAILVDTKIESIKLEGKTHNWAVSKKLRESLEKPLILAGGLNKDNVLEAIKTVKPYAIDVSSSLEAYGGKKDLKKVDEFLEVIKKV.

It belongs to the TrpF family.

The catalysed reaction is N-(5-phospho-beta-D-ribosyl)anthranilate = 1-(2-carboxyphenylamino)-1-deoxy-D-ribulose 5-phosphate. It participates in amino-acid biosynthesis; L-tryptophan biosynthesis; L-tryptophan from chorismate: step 3/5. This chain is N-(5'-phosphoribosyl)anthranilate isomerase (trpF), found in Methanocaldococcus jannaschii (strain ATCC 43067 / DSM 2661 / JAL-1 / JCM 10045 / NBRC 100440) (Methanococcus jannaschii).